Here is a 548-residue protein sequence, read N- to C-terminus: WEB family protein At1g12150 (548 aa).

A coiled-coil region spans residues 71–544; it reads KEFMKIKQKL…ELQRWRQQEN (474 aa). Basic and acidic residues predominate over residues 430 to 448; that stretch reads VREEMKMISQKQESKKQDE. The interval 430–455 is disordered; the sequence is VREEMKMISQKQESKKQDEESSGSKI.

Belongs to the WEB family.

The chain is WEB family protein At1g12150 from Arabidopsis thaliana (Mouse-ear cress).